The primary structure comprises 654 residues: Kelch-like protein 13 (654 aa).

The 70-residue stretch at 91–160 (CDVTLMPGDT…IYTAKLSLNM (70 aa)) folds into the BTB domain. A BACK domain is found at 195–296 (CVEVGRIANT…TPQELINYVQ (102 aa)). Kelch repeat units lie at residues 340 to 388 (RLVT…VIGN), 389 to 440 (FLYV…ALKG), 441 to 487 (FLYA…VYGG), 489 to 534 (MYIS…TVGD), 536 to 586 (LYVI…VFEN), and 587 to 635 (KIYV…TLTV).

Component of the BCR(KLHL9-KLHL13) E3 ubiquitin ligase complex, at least composed of CUL3, KLHL9, KLHL13 and RBX1. Interacts with AURKB.

The protein operates within protein modification; protein ubiquitination. Functionally, substrate-specific adapter of a BCR (BTB-CUL3-RBX1) E3 ubiquitin-protein ligase complex required for mitotic progression and cytokinesis. The BCR(KLHL9-KLHL13) E3 ubiquitin ligase complex mediates the ubiquitination of AURKB and controls the dynamic behavior of AURKB on mitotic chromosomes and thereby coordinates faithful mitotic progression and completion of cytokinesis. The protein is Kelch-like protein 13 (Klhl13) of Mus musculus (Mouse).